We begin with the raw amino-acid sequence, 630 residues long: A-type voltage-gated potassium channel KCND2 (630 aa).

The Cytoplasmic segment spans residues 1 to 184 (MAAGVAAWLP…FENPHTSTMA (184 aa)). Residues 2-20 (AAGVAAWLPFARAAAIGWM) form an interaction with KCNIP1, KCNIP2, and other family members region. A Phosphothreonine modification is found at Thr-38. Positions 71-90 (ERDFFYHPETQQYFFDRDPD) are interaction with KCNIP1. Zn(2+) is bound by residues His-105, Cys-111, Cys-132, and Cys-133. The chain crosses the membrane as a helical span at residues 185–206 (LVFYYVTGFFIAVSVIANVVET). At 207–226 (VPCGSSPGHIKELPCGERYA) the chain is on the extracellular side. A helical transmembrane segment spans residues 227–249 (VAFFCLDTACVMIFTVEYLLRLA). The Cytoplasmic portion of the chain corresponds to 250-256 (AAPSRYR). Residues 257-281 (FVRSVMSIIDVVAILPYYIGLVMTD) traverse the membrane as a helical segment. At 282–287 (NEDVSG) the chain is on the extracellular side. The helical; Voltage-sensor transmembrane segment at 288-307 (AFVTLRVFRVFRIFKFSRHS) threads the bilayer. At 308–321 (QGLRILGYTLKSCA) the chain is on the cytoplasmic side. The segment at 308-321 (QGLRILGYTLKSCA) is S4-S5 linker. A helical membrane pass occupies residues 322 to 345 (SELGFLLFSLTMAIIIFATVMFYA). The Extracellular segment spans residues 346-357 (EKGSSASKFTSI). Positions 358-369 (PAAFWYTIVTMT) form an intramembrane region, helical. Residues Thr-370, Leu-371, Gly-372, and Tyr-373 each contribute to the K(+) site. The Selectivity filter signature appears at 370–375 (TLGYGD). The stretch at 370–377 (TLGYGDMV) is an intramembrane region. The Extracellular segment spans residues 378 to 380 (PKT). A helical transmembrane segment spans residues 381-403 (IAGKIFGSICSLSGVLVIALPVP). Residues 404–630 (VIVSNFSRIY…GGNIVRVSAL (227 aa)) lie on the Cytoplasmic side of the membrane. The interval 474 to 489 (FETQHHHLLHCLEKTT) is required for dendritic targeting. The interval 474 to 630 (FETQHHHLLH…GGNIVRVSAL (157 aa)) is important for normal channel activation and inactivation, for interaction with KCNIP2, and probably other family members as well. Phosphoserine occurs at positions 548, 552, 572, and 575. Residues 600–622 (IPTPPVTTPEGDDRPESPEYSGG) are disordered. A phosphothreonine mark is found at Thr-602 and Thr-607. Ser-616 carries the phosphoserine modification. The short motif at 627 to 630 (VSAL) is the PDZ-binding element.

This sequence belongs to the potassium channel family. D (Shal) (TC 1.A.1.2) subfamily. Kv4.2/KCND2 sub-subfamily. In terms of assembly, homotetramer or heterotetramer with KCND1 or KCND3. Associates with the regulatory subunits KCNIP2, KCNIP3 and KCNIP4. Interacts with the regulatory subunit KCNIP1; this interaction mediates the capture of both the N- and C-terminus of KCND2, preventing N-type inactivation and stabilizing the S6 conformation, thereby accelerating closed state inactivation and recovery. In vivo, probably exists as heteromeric complex containing variable proportions of KCND1, KCND2, KCND3, KCNIP1, KCNIP2, KCNIP3, KCNIP4, DPP6 and DPP10. The tetrameric channel can associate with up to four regulatory subunits, such as KCNIP2 or KCNIP4. Interaction with four KCNIP4 chains does not reduce interaction with DPP10. Interacts with DLG4 and NCS1/FREQ. Interacts with DLG1. Probably part of a complex consisting of KCNIP1, KCNIP2 isoform 3 and KCND2. Interacts with FLNA, FLNC and DPP10. Identified in a complex with cAMP-dependent protein kinase (PKA), CAV3, AKAP6 and KCND3 in cardiac myocytes. Interacts (via S1 and S2 helices) with DPP6; this interaction stabilizes the conformation of the S1-S2 helices and facilitates S4 conformational change, including S4 sliding up and down, thereby accelerating activation, inactivation, and recovery. Post-translationally, phosphorylation in response to MAPK activation is increased in stimulated dendrites. Interaction with KCNIP2 and DPP6 propomtes phosphorylation by PKA at Ser-552. Phosphorylation at Ser-552 has no effect on interaction with KCNIP3, but is required for the regulation of channel activity by KCNIP3. Phosphorylation at Ser-552 leads to KCND2 internalization. Phosphorylated by MAPK in response to signaling via the metabotropic glutamate receptor GRM5. Phosphorylation at Ser-616 is required for the down-regulation of neuronal A-type currents in response to signaling via GRM5.

It localises to the cell membrane. Its subcellular location is the cell projection. The protein resides in the dendrite. The protein localises to the synapse. It is found in the perikaryon. It localises to the postsynaptic cell membrane. Its subcellular location is the dendritic spine. The protein resides in the sarcolemma. The protein localises to the cell junction. It is found in the membrane. It localises to the caveola. The catalysed reaction is K(+)(in) = K(+)(out). In terms of biological role, voltage-gated potassium channel that mediates transmembrane potassium transport in excitable membranes, primarily in the brain, but also in rodent heart. Mediates the major part of the dendritic A-type current I(SA) in brain neurons. This current is activated at membrane potentials that are below the threshold for action potentials. It regulates neuronal excitability, prolongs the latency before the first spike in a series of action potentials, regulates the frequency of repetitive action potential firing, shortens the duration of action potentials and regulates the back-propagation of action potentials from the neuronal cell body to the dendrites. Contributes to the regulation of the circadian rhythm of action potential firing in suprachiasmatic nucleus neurons, which regulates the circadian rhythm of locomotor activity. Functions downstream of the metabotropic glutamate receptor GRM5 and plays a role in neuronal excitability and in nociception mediated by activation of GRM5. Mediates the transient outward current I(to) in rodent heart left ventricle apex cells, but not in human heart, where this current is mediated by another family member. Forms tetrameric potassium-selective channels through which potassium ions pass in accordance with their electrochemical gradient. The channel alternates between opened and closed conformations in response to the voltage difference across the membrane. Can form functional homotetrameric channels and heterotetrameric channels that contain variable proportions of KCND2 and KCND3; channel properties depend on the type of pore-forming alpha subunits that are part of the channel. In vivo, membranes probably contain a mixture of heteromeric potassium channel complexes. Interaction with specific isoforms of the regulatory subunits KCNIP1, KCNIP2, KCNIP3 or KCNIP4 strongly increases expression at the cell surface and thereby increases channel activity; it modulates the kinetics of channel activation and inactivation, shifts the threshold for channel activation to more negative voltage values, shifts the threshold for inactivation to less negative voltages and accelerates recovery after inactivation. Likewise, interaction with DPP6 or DPP10 promotes expression at the cell membrane and regulates both channel characteristics and activity. Upon depolarization, the channel goes from a resting closed state (C state) to an activated but non-conducting state (C* state), from there, the channel may either inactivate (I state) or open (O state). This is A-type voltage-gated potassium channel KCND2 from Mustela putorius furo (European domestic ferret).